Consider the following 110-residue polypeptide: Minor capsid protein VP2 (110 aa).

It belongs to the vesivirus VP2 protein family. Homooligomer. The portal-like structure consists in 12 copies of VP2. Interacts with capsid protein VP1.

It localises to the virion. The protein resides in the host cytoplasm. Its function is as follows. Minor structural protein that forms a portal-like structure at a unique three-fold axis of symmetry, following binding to the host receptor. The channel formed by VP2 may allow the delivery of the viral genome through the host endosomal membrane. The protein is Minor capsid protein VP2 of Otariidae (fur seals &amp; sea lions).